We begin with the raw amino-acid sequence, 261 residues long: Succinate dehydrogenase iron-sulfur subunit (261 aa).

The segment at 1–23 (MAELRLPPNSVVKKGKEHKEQEE) is disordered. Residues 28–119 (RKVKIYRYDP…DIKIYPLPHM (92 aa)) form the 2Fe-2S ferredoxin-type domain. Residues Cys80, Cys85, and Cys100 each contribute to the [2Fe-2S] cluster site. The 4Fe-4S ferredoxin-type domain maps to 161 to 191 (GREKLDGLYECILCACCSTSCPSYWWNGDKY). 3 residues coordinate [4Fe-4S] cluster: Cys171, Cys174, and Cys177. Residue Cys181 coordinates [3Fe-4S] cluster. Trp186 is a binding site for a ubiquinone. [3Fe-4S] cluster is bound by residues Cys228 and Cys234. Cys238 contacts [4Fe-4S] cluster.

The protein belongs to the succinate dehydrogenase/fumarate reductase iron-sulfur protein family. As to quaternary structure, part of an enzyme complex containing four subunits: a flavoprotein, an iron-sulfur, cytochrome b-556, and a hydrophobic anchor protein. [2Fe-2S] cluster serves as cofactor. [3Fe-4S] cluster is required as a cofactor. Requires [4Fe-4S] cluster as cofactor.

The enzyme catalyses a quinone + succinate = fumarate + a quinol. Its pathway is carbohydrate metabolism; tricarboxylic acid cycle; fumarate from succinate (bacterial route): step 1/1. This is Succinate dehydrogenase iron-sulfur subunit (sdhB) from Rickettsia felis (strain ATCC VR-1525 / URRWXCal2) (Rickettsia azadi).